We begin with the raw amino-acid sequence, 360 residues long: D-alanine--D-alanine ligase (360 aa).

Positions 139-344 constitute an ATP-grasp domain; the sequence is KDVFAQAGLA…YPELIEKLVS (206 aa). 172–227 provides a ligand contact to ATP; sequence EQVLGYPCFVKPANMGSSVGISKCRSKEELQTAFDLAFQYDRRVVVEEGVVGREIE. Asp-298, Glu-311, and Asn-313 together coordinate Mg(2+).

The protein belongs to the D-alanine--D-alanine ligase family. Mg(2+) serves as cofactor. The cofactor is Mn(2+).

It localises to the cytoplasm. It carries out the reaction 2 D-alanine + ATP = D-alanyl-D-alanine + ADP + phosphate + H(+). Its pathway is cell wall biogenesis; peptidoglycan biosynthesis. In terms of biological role, cell wall formation. This is D-alanine--D-alanine ligase from Bacillus pumilus (strain SAFR-032).